The sequence spans 671 residues: DNA ligase (671 aa).

Residues 37–41 (DIEYD), 86–87 (SL), and Glu-117 each bind NAD(+). The active-site N6-AMP-lysine intermediate is the Lys-119. Residues Arg-140, Glu-177, Lys-295, and Lys-319 each coordinate NAD(+). Zn(2+) contacts are provided by Cys-413, Cys-416, Cys-431, and Cys-437. Positions 594 to 671 (IISAAVFGKT…DEEEMLNLLK (78 aa)) constitute a BRCT domain.

This sequence belongs to the NAD-dependent DNA ligase family. LigA subfamily. The cofactor is Mg(2+). It depends on Mn(2+) as a cofactor.

It carries out the reaction NAD(+) + (deoxyribonucleotide)n-3'-hydroxyl + 5'-phospho-(deoxyribonucleotide)m = (deoxyribonucleotide)n+m + AMP + beta-nicotinamide D-nucleotide.. Its function is as follows. DNA ligase that catalyzes the formation of phosphodiester linkages between 5'-phosphoryl and 3'-hydroxyl groups in double-stranded DNA using NAD as a coenzyme and as the energy source for the reaction. It is essential for DNA replication and repair of damaged DNA. This is DNA ligase from Polynucleobacter asymbioticus (strain DSM 18221 / CIP 109841 / QLW-P1DMWA-1) (Polynucleobacter necessarius subsp. asymbioticus).